The following is a 199-amino-acid chain: Elongation factor Ts (199 aa).

An involved in Mg(2+) ion dislocation from EF-Tu region spans residues 80 to 83 (TDFV).

Belongs to the EF-Ts family.

Its subcellular location is the cytoplasm. Functionally, associates with the EF-Tu.GDP complex and induces the exchange of GDP to GTP. It remains bound to the aminoacyl-tRNA.EF-Tu.GTP complex up to the GTP hydrolysis stage on the ribosome. This Thermodesulfovibrio yellowstonii (strain ATCC 51303 / DSM 11347 / YP87) protein is Elongation factor Ts.